We begin with the raw amino-acid sequence, 806 residues long: U3 small nucleolar RNA-associated protein 17 (806 aa).

WD repeat units lie at residues 266–305 (WHAN…RQFL), 448–489 (RNGL…KTWV), 499–538 (GNLE…SAWK), and 598–635 (PHGG…VQWT).

As to quaternary structure, component of the ribosomal small subunit (SSU) processome.

It localises to the nucleus. The protein localises to the nucleolus. Functionally, involved in nucleolar processing of pre-18S ribosomal RNA. Required for optimal pre-ribosomal RNA transcription by RNA polymerase I together with a subset of U3 proteins required for transcription (t-UTPs). The polypeptide is U3 small nucleolar RNA-associated protein 17 (utp17) (Schizosaccharomyces pombe (strain 972 / ATCC 24843) (Fission yeast)).